Here is a 142-residue protein sequence, read N- to C-terminus: Hemoglobin subunit theta-1 (142 aa).

One can recognise a Globin domain in the interval 2–142; the sequence is ALAAADRATV…VISALASDCR (141 aa). Heme b is bound by residues His-59 and His-88.

This sequence belongs to the globin family.

The protein is Hemoglobin subunit theta-1 (HBQ1) of Equus caballus (Horse).